The chain runs to 299 residues: GTPase Era (299 aa).

One can recognise an Era-type G domain in the interval 5 to 172 (KSGFVSIIGR…IDVLKSFLPE (168 aa)). The G1 stretch occupies residues 13-20 (GRPNVGKS). 13-20 (GRPNVGKS) contributes to the GTP binding site. Residues 39-43 (QTTRN) form a G2 region. The segment at 60 to 63 (DTPG) is G3. GTP is bound by residues 60 to 64 (DTPGI) and 122 to 125 (NKID). Residues 122-125 (NKID) are G4. A G5 region spans residues 151–153 (ISA). The region spanning 203–280 (TSEEIPHAIG…YLELWVKVQR (78 aa)) is the KH type-2 domain.

This sequence belongs to the TRAFAC class TrmE-Era-EngA-EngB-Septin-like GTPase superfamily. Era GTPase family. Monomer.

The protein localises to the cytoplasm. It localises to the cell membrane. In terms of biological role, an essential GTPase that binds both GDP and GTP, with rapid nucleotide exchange. Plays a role in 16S rRNA processing and 30S ribosomal subunit biogenesis and possibly also in cell cycle regulation and energy metabolism. The polypeptide is GTPase Era (Staphylococcus epidermidis (strain ATCC 12228 / FDA PCI 1200)).